The chain runs to 635 residues: Moesin/ezrin/radixin homolog 2 (635 aa).

In terms of domain architecture, FERM spans 12-305 (LSVRVSTFDS…GNHDLYMRRR (294 aa)).

Interacts with Moe and arm at the adherens junction. Forms a complex with Kibra and Ex. Interacts (via FERM domain) with Sav (via FBM motif). Interacts with Schip1. As to expression, expressed predominantly in the germline. Expressed in the developing oocyte from stage 6 to the end of oogenesis and in the apical ends of follical cells from stage 10. Ubiquitous expression throughout embryogenesis with enhanced expression in mesoderm of early embryos and midgut of late embryos. In embryonic CNS, expression is seen in neuropil and developing brain and is enhanced in neuronal cell bodies. In embryonic PNS, expression is seen within the cell body. In third instar larvae, expression is uniform in the eye imaginal disk and is enhanced at the morphogenetic furrow. In pupal eyes, expression is seen in the cytoplasm of secondary and tertiary pigment cells, bristle precursor cells and rhabdomeres.

It localises to the cell junction. The protein resides in the adherens junction. The protein localises to the cell membrane. It is found in the cytoplasm. Its subcellular location is the cytoskeleton. It localises to the apical cell membrane. The protein resides in the cell projection. The protein localises to the rhabdomere. Functionally, regulator of the Hippo/SWH (Sav/Wts/Hpo) signaling pathway, a signaling pathway that plays a pivotal role in organ size control and tumor suppression by restricting proliferation and promoting apoptosis. The core of this pathway is composed of a kinase cascade wherein Hippo (Hpo), in complex with its regulatory protein Salvador (Sav), phosphorylates and activates Warts (Wts) in complex with its regulatory protein Mats, which in turn phosphorylates and inactivates the Yorkie (Yki) oncoprotein. Mer acts synergistically along with Ex and Kibra to regulate the Hippo signaling pathway. The polypeptide is Moesin/ezrin/radixin homolog 2 (Mer) (Drosophila melanogaster (Fruit fly)).